Consider the following 161-residue polypeptide: Protein-export protein SecB (161 aa).

Belongs to the SecB family. In terms of assembly, homotetramer, a dimer of dimers. One homotetramer interacts with 1 SecA dimer.

It is found in the cytoplasm. Its function is as follows. One of the proteins required for the normal export of preproteins out of the cell cytoplasm. It is a molecular chaperone that binds to a subset of precursor proteins, maintaining them in a translocation-competent state. It also specifically binds to its receptor SecA. In Shewanella sp. (strain ANA-3), this protein is Protein-export protein SecB.